Here is a 344-residue protein sequence, read N- to C-terminus: Dihydroorotase (344 aa).

2 residues coordinate Zn(2+): histidine 13 and histidine 15. Residues 15–17 (HLR) and asparagine 41 contribute to the substrate site. Residues lysine 98, histidine 135, and histidine 173 each contribute to the Zn(2+) site. The residue at position 98 (lysine 98) is an N6-carboxylysine. Histidine 135 contributes to the substrate binding site. Leucine 218 contacts substrate. Aspartate 247 provides a ligand contact to Zn(2+). Aspartate 247 is an active-site residue. Positions 251 and 263 each coordinate substrate.

Belongs to the metallo-dependent hydrolases superfamily. DHOase family. Class II DHOase subfamily. Homodimer. Requires Zn(2+) as cofactor.

The enzyme catalyses (S)-dihydroorotate + H2O = N-carbamoyl-L-aspartate + H(+). It participates in pyrimidine metabolism; UMP biosynthesis via de novo pathway; (S)-dihydroorotate from bicarbonate: step 3/3. Catalyzes the reversible cyclization of carbamoyl aspartate to dihydroorotate. This is Dihydroorotase from Neisseria meningitidis serogroup B (strain ATCC BAA-335 / MC58).